A 408-amino-acid polypeptide reads, in one-letter code: NADH-quinone oxidoreductase subunit D (408 aa).

The protein belongs to the complex I 49 kDa subunit family. In terms of assembly, NDH-1 is composed of 14 different subunits. Subunits NuoB, C, D, E, F, and G constitute the peripheral sector of the complex.

It is found in the cell inner membrane. The catalysed reaction is a quinone + NADH + 5 H(+)(in) = a quinol + NAD(+) + 4 H(+)(out). In terms of biological role, NDH-1 shuttles electrons from NADH, via FMN and iron-sulfur (Fe-S) centers, to quinones in the respiratory chain. The immediate electron acceptor for the enzyme in this species is believed to be ubiquinone. Couples the redox reaction to proton translocation (for every two electrons transferred, four hydrogen ions are translocated across the cytoplasmic membrane), and thus conserves the redox energy in a proton gradient. The polypeptide is NADH-quinone oxidoreductase subunit D (Campylobacter jejuni subsp. doylei (strain ATCC BAA-1458 / RM4099 / 269.97)).